The chain runs to 300 residues: Endonuclease III-like protein 1 (300 aa).

The transit peptide at 1–19 directs the protein to the mitochondrion; the sequence is MNSGVRMVTRSRSRATRIA. A disordered region spans residues 1-53; that stretch reads MNSGVRMVTRSRSRATRIASEGCREELAPREAAAEGRKSHRPVRHPRRTQKTH. The segment covering 22–37 has biased composition (basic and acidic residues); the sequence is GCREELAPREAAAEGR. Residues 38–51 show a composition bias toward basic residues; that stretch reads KSHRPVRHPRRTQK. Positions 187 to 211 constitute a HhH domain; the sequence is RYEGDIPASVAELVALPGVGPKMAH. The Nucleophile; for N-glycosylase activity role is filled by Lys208. [4Fe-4S] cluster-binding residues include Cys278, Cys285, Cys288, and Cys294.

This sequence belongs to the Nth/MutY family. In terms of assembly, interacts with YBX1. Interacts with ERCC5/XPG; the interaction stimulates NTHL1 activity and NTHL1 binding to its DNA substrate. [4Fe-4S] cluster is required as a cofactor. Post-translationally, ubiquitinated by TRIM26; leading to proteasomal degradation. Widely expressed.

Its subcellular location is the nucleus. It is found in the mitochondrion. It carries out the reaction 2'-deoxyribonucleotide-(2'-deoxyribose 5'-phosphate)-2'-deoxyribonucleotide-DNA = a 3'-end 2'-deoxyribonucleotide-(2,3-dehydro-2,3-deoxyribose 5'-phosphate)-DNA + a 5'-end 5'-phospho-2'-deoxyribonucleoside-DNA + H(+). Functionally, bifunctional DNA N-glycosylase with associated apurinic/apyrimidinic (AP) lyase function that catalyzes the first step in base excision repair (BER), the primary repair pathway for the repair of oxidative DNA damage. The DNA N-glycosylase activity releases the damaged DNA base from DNA by cleaving the N-glycosidic bond, leaving an AP site. The AP lyase activity cleaves the phosphodiester bond 3' to the AP site by a beta-elimination. Primarily recognizes and repairs oxidative base damage of pyrimidines. This is Endonuclease III-like protein 1 (Nthl1) from Mus musculus (Mouse).